The following is a 585-amino-acid chain: Arginine--tRNA ligase (585 aa).

A 'HIGH' region motif is present at residues 131–141 (ANPTGPMHVGH).

It belongs to the class-I aminoacyl-tRNA synthetase family. Monomer.

The protein resides in the cytoplasm. The enzyme catalyses tRNA(Arg) + L-arginine + ATP = L-arginyl-tRNA(Arg) + AMP + diphosphate. This is Arginine--tRNA ligase from Brucella abortus (strain S19).